The following is a 155-amino-acid chain: Small ribosomal subunit protein uS7c (155 aa).

This sequence belongs to the universal ribosomal protein uS7 family. In terms of assembly, part of the 30S ribosomal subunit.

The protein resides in the plastid. Its subcellular location is the chloroplast. One of the primary rRNA binding proteins, it binds directly to 16S rRNA where it nucleates assembly of the head domain of the 30S subunit. This Gunnera chilensis (Chilean rhubarb) protein is Small ribosomal subunit protein uS7c (rps7).